The primary structure comprises 2346 residues: Nucleoprotein TPR (2346 aa).

Coiled coils occupy residues 38 to 190 (DEYC…HKEI), 217 to 366 (QLQS…NLES), 395 to 493 (YAKS…SRQV), and 565 to 596 (KMLL…NNTV). Residues 622-649 (VDLDDSNLEPNDSALDTSEQPAANFEES) are disordered. Residues 629-642 (LEPNDSALDTSEQP) show a composition bias toward polar residues. Coiled coils occupy residues 643-1158 (AANF…IEAL) and 1196-1247 (EEGR…DELN). Positions 1187–1655 (LNASGLTAAE…SPRTANVKPM (469 aa)) are interacts with Mad1. A phosphothreonine mark is found at Thr-1259, Thr-1302, Thr-1338, and Thr-1390. 2 coiled-coil regions span residues 1281-1536 (TDSN…KRTE) and 1579-1627 (SYDE…GSQQ). 2 stretches are compositionally biased toward polar residues: residues 1621 to 1649 (RQLG…SPRT) and 1657 to 1667 (GSATVQQSATV). 3 disordered regions span residues 1621 to 1677 (RQLG…ETPL), 1695 to 1768 (PTSQ…YMPS), and 1821 to 2346 (SPRV…GRFP). Low complexity predominate over residues 1702–1722 (AGSSTSTSSSSSSSSTSTTSA). Polar residues predominate over residues 1738–1747 (PQQQVHTTGS). Low complexity-rich tracts occupy residues 1752–1761 (SMASSSPTSS) and 1827–1878 (SSSS…PSSS). Residues 1879–1891 (NVTTTQAGCSSQG) show a composition bias toward polar residues. Residues 1953–2023 (QEDDIQVVDS…QDNNEVDIEV (71 aa)) show a composition bias toward acidic residues. Over residues 2028-2080 (MQAQEESQSLDNQAIATASASTQENNQSQAITSGSGESSNPVTLPQAEASNWK) the composition is skewed to polar residues. The span at 2082 to 2091 (AAASTSTAAA) shows a compositional bias: low complexity. Polar residues-rich tracts occupy residues 2097-2110 (SVEI…SNFC) and 2142-2159 (GAAS…GESS). The span at 2165-2184 (KAADDGGDHADGTDNAREAD) shows a compositional bias: basic and acidic residues. Polar residues-rich tracts occupy residues 2193-2223 (ATGQ…NQAN) and 2302-2322 (RDTS…NRFA). Residues 2323–2332 (QRTRNRRPIR) are compositionally biased toward basic residues.

It belongs to the TPR family. In terms of assembly, part of the nuclear pore complex (NPC). Associates with male-specific lethal (MSL) histone acetyltransferase complex. Interacts with Mad2; the interaction is required for efficient recruitment of Mad2 to unattached kinetochore and occurs in a microtubule-independent manner. Interacts with Mad1 (N-terminus). Interacts with Chro, east and Asator; the interaction is part of a macromolecular complex forming the spindle matrix during mitosis. Interacts with Nup98. In males, interacts with histone acetyltransferase mof. In terms of processing, mps1-mediated phosphorylation disrupts interaction with Mad1 during mitosis. As to expression, expressed in salivary glands, fat body, tracheal tube, esophageal tube and anterior ejaculatory duct (at protein level).

Its subcellular location is the nucleus. It localises to the nucleus matrix. The protein localises to the nucleus lamina. It is found in the nucleus envelope. The protein resides in the nucleus membrane. Its subcellular location is the nuclear pore complex. It localises to the cytoplasm. The protein localises to the cytoskeleton. It is found in the spindle. The protein resides in the chromosome. Its subcellular location is the centromere. It localises to the kinetochore. The protein localises to the midbody. In terms of biological role, component of the nuclear pore complex (NPC), a complex required for the trafficking across the nuclear envelope. Functions as a scaffolding element in the nuclear phase of the NPC. Plays a role in chromosomal organization and gene expression regulation; stimulates transcription by promoting the formation of an open chromatin environment. Binds chromatin to nucleoporin-associated regions (NARs) that define transcriptionally active regions of the genome. Associates with extended chromosomal regions that alternate between domains of high density binding with those of low occupancy. Preferentially binds to NARs of the male X chromosome. In males, together with Nup153, required for the localization of the male-specific lethal (MSL) histone acetyltransferase complex to the X chromosome and therefore for the transcription of dosage compensation genes. In males, restrains dosage-compensated expression at the level of nascent transcription probably by interacting with the MSL complex and by modulating RNA Polymerase II phosphorylation status and activity. During mitosis forms a gel-like spindle matrix complex together with Skeletor (Skel), Chro, east, and Asator embedding the microtubule spindle apparatus. During interphase localizes Mad1 to the nuclear pore complex and thereby might act as a scaffold to assemble the Mad1-C-Mad2 complex, a heterotetramer that catalyzes the structural conversion of open-Mad2 (O-Mad2) into closed-Mad2 (C-Mad2) which is essential for spindle-assembly checkpoint (SAC). During the metaphase-anaphase transition and before chromosome congression, is phosphorylated by Msp-1; this modification releases Mad1 from the nuclear pore complex and thereby promotes assembly of SAC ensuring a timely and effective recruitment of spindle checkpoint proteins like Mad1, Mad2 and Mps1 to unattached kinetochores (KT). In testes, has a role in stem cell asymmetric division and maintenance via regulation of mitotic spindle assembly checkpoint (SAC) complex. This is Nucleoprotein TPR from Drosophila melanogaster (Fruit fly).